The following is a 398-amino-acid chain: Putative molybdopterin biosynthesis protein MJ0666 (398 aa).

The protein belongs to the MoeA family.

It functions in the pathway cofactor biosynthesis; molybdopterin biosynthesis. This is Putative molybdopterin biosynthesis protein MJ0666 from Methanocaldococcus jannaschii (strain ATCC 43067 / DSM 2661 / JAL-1 / JCM 10045 / NBRC 100440) (Methanococcus jannaschii).